A 269-amino-acid polypeptide reads, in one-letter code: tRNA pseudouridine synthase A (269 aa).

D51 serves as the catalytic Nucleophile. Residue Y109 coordinates substrate.

It belongs to the tRNA pseudouridine synthase TruA family. As to quaternary structure, homodimer.

It catalyses the reaction uridine(38/39/40) in tRNA = pseudouridine(38/39/40) in tRNA. Functionally, formation of pseudouridine at positions 38, 39 and 40 in the anticodon stem and loop of transfer RNAs. The sequence is that of tRNA pseudouridine synthase A from Histophilus somni (strain 129Pt) (Haemophilus somnus).